Consider the following 274-residue polypeptide: uncharacterized protein (274 aa).

This is an uncharacterized protein from Caenorhabditis elegans.